The primary structure comprises 1401 residues: DNA-directed RNA polymerase subunit beta' (1401 aa).

Zn(2+)-binding residues include Cys-70, Cys-72, Cys-85, and Cys-88. Positions 460, 462, and 464 each coordinate Mg(2+). Zn(2+) is bound by residues Cys-808, Cys-882, Cys-889, and Cys-892.

Belongs to the RNA polymerase beta' chain family. The RNAP catalytic core consists of 2 alpha, 1 beta, 1 beta' and 1 omega subunit. When a sigma factor is associated with the core the holoenzyme is formed, which can initiate transcription. Mg(2+) is required as a cofactor. Requires Zn(2+) as cofactor.

The enzyme catalyses RNA(n) + a ribonucleoside 5'-triphosphate = RNA(n+1) + diphosphate. Its function is as follows. DNA-dependent RNA polymerase catalyzes the transcription of DNA into RNA using the four ribonucleoside triphosphates as substrates. The chain is DNA-directed RNA polymerase subunit beta' from Legionella pneumophila (strain Paris).